Reading from the N-terminus, the 151-residue chain is Small ribosomal subunit protein uS11A (151 aa).

The disordered stretch occupies residues 131–151 (DVTPIPSDSTRRKGGRRGRRL). The segment covering 142-151 (RKGGRRGRRL) has biased composition (basic residues).

It belongs to the universal ribosomal protein uS11 family.

The protein is Small ribosomal subunit protein uS11A of Drosophila melanogaster (Fruit fly).